The following is a 145-amino-acid chain: Putative pre-16S rRNA nuclease (145 aa).

This sequence belongs to the YqgF nuclease family.

Its subcellular location is the cytoplasm. In terms of biological role, could be a nuclease involved in processing of the 5'-end of pre-16S rRNA. The polypeptide is Putative pre-16S rRNA nuclease (Pseudomonas fluorescens).